A 133-amino-acid chain; its full sequence is uncharacterized protein (133 aa).

Transmembrane regions (helical) follow at residues 8 to 28 and 46 to 66; these read MVLL…LLLL and SFSI…SIGA.

The protein localises to the membrane. This is an uncharacterized protein from Saccharomyces cerevisiae (strain ATCC 204508 / S288c) (Baker's yeast).